The chain runs to 297 residues: GTPase Era (297 aa).

Residues 7–174 form the Era-type G domain; that stretch reads RSGFVSIVGR…VQLVHGLLPE (168 aa). A G1 region spans residues 15 to 22; it reads GRPNVGKS. 15 to 22 is a GTP binding site; sequence GRPNVGKS. The segment at 41–45 is G2; it reads QTTRN. The interval 62-65 is G3; the sequence is DTPG. GTP contacts are provided by residues 62-66 and 124-127; these read DTPGI and NKID. Positions 124–127 are G4; that stretch reads NKID. Residues 153 to 155 are G5; that stretch reads VSA. The region spanning 205–282 is the KH type-2 domain; that stretch reads THDEVPYSTA…FLELFVRVSG (78 aa).

This sequence belongs to the TRAFAC class TrmE-Era-EngA-EngB-Septin-like GTPase superfamily. Era GTPase family. In terms of assembly, monomer.

Its subcellular location is the cytoplasm. It localises to the cell inner membrane. Functionally, an essential GTPase that binds both GDP and GTP, with rapid nucleotide exchange. Plays a role in 16S rRNA processing and 30S ribosomal subunit biogenesis and possibly also in cell cycle regulation and energy metabolism. The polypeptide is GTPase Era (Geobacter sp. (strain M21)).